Here is a 367-residue protein sequence, read N- to C-terminus: tRNA/tmRNA (uracil-C(5))-methyltransferase (367 aa).

Q190, Y218, N223, E239, and D299 together coordinate S-adenosyl-L-methionine. The active-site Nucleophile is C324. E358 functions as the Proton acceptor in the catalytic mechanism.

It belongs to the class I-like SAM-binding methyltransferase superfamily. RNA M5U methyltransferase family. TrmA subfamily.

The enzyme catalyses uridine(54) in tRNA + S-adenosyl-L-methionine = 5-methyluridine(54) in tRNA + S-adenosyl-L-homocysteine + H(+). It carries out the reaction uridine(341) in tmRNA + S-adenosyl-L-methionine = 5-methyluridine(341) in tmRNA + S-adenosyl-L-homocysteine + H(+). In terms of biological role, dual-specificity methyltransferase that catalyzes the formation of 5-methyluridine at position 54 (m5U54) in all tRNAs, and that of position 341 (m5U341) in tmRNA (transfer-mRNA). This Pectobacterium carotovorum subsp. carotovorum (strain PC1) protein is tRNA/tmRNA (uracil-C(5))-methyltransferase.